Reading from the N-terminus, the 148-residue chain is 3-dehydroquinate dehydratase (148 aa).

The Proton acceptor role is filled by Tyr-26. Positions 77, 83, and 90 each coordinate substrate. The active-site Proton donor is the His-103. Substrate contacts are provided by residues 104 to 105 (LS) and Arg-114.

This sequence belongs to the type-II 3-dehydroquinase family. Homododecamer.

It catalyses the reaction 3-dehydroquinate = 3-dehydroshikimate + H2O. Its pathway is metabolic intermediate biosynthesis; chorismate biosynthesis; chorismate from D-erythrose 4-phosphate and phosphoenolpyruvate: step 3/7. In terms of biological role, catalyzes a trans-dehydration via an enolate intermediate. In Pasteurella multocida (strain Pm70), this protein is 3-dehydroquinate dehydratase (aroQ).